Reading from the N-terminus, the 528-residue chain is MASFVDRVVLHVSGGTGGHGCVSVKREKFKPLGGPDGGNGGNGGDVILRVSAQTTTLLDYHHAPHRHATNGGPGMGDWRGGKNGETLILPVPDGTVVKTKDGEVLADLVGEGTEYIAAAGGQGGLGNASLSSQKRRAPGFALLGIEGESSDIVLELKSIADIALVGFPSAGKSSLIAAMSAARPKIADYPFTTLIPNLGVVQAGDVRFTIADVPGLIEGASEGKGLGHNFLRHVERCAALVHVLDCGTLESDRDPLSDLAIIEAELEKYAVDMSYAGVDGEVVPLNERPKLVVLNKVDLPDGKDMAEFVRPDLEARGYRVFEVSATSHEGLRQLGFAMAEIVQAARNAVQAAPPKVAPPVLRPRAVNESGFKIRREEKNLEPLFRVLGEKPVRWVKQTDFTNEEAIGYLADRLAKLGVETELFKVGAKPGDTVVIGEDDGVVFDWEPTMMAGAELLATPRGTDIRVADIGDRPTRSQKRDEQIERREAKAAARAELEAERKAGIWTESVSGRRAQAVKESHLDSGDDD.

An Obg domain is found at 2–159 (ASFVDRVVLH…SDIVLELKSI (158 aa)). In terms of domain architecture, OBG-type G spans 160 to 343 (ADIALVGFPS…LGFAMAEIVQ (184 aa)). GTP-binding positions include 166–173 (GFPSAGKS), 191–195 (FTTLI), 212–215 (DVPG), 295–298 (NKVD), and 324–326 (SAT). Ser173 and Thr193 together coordinate Mg(2+). Residues 363 to 447 (PRAVNESGFK…DDGVVFDWEP (85 aa)) enclose the OCT domain. Residues 471 to 490 (DRPTRSQKRDEQIERREAKA) form a disordered region.

The protein belongs to the TRAFAC class OBG-HflX-like GTPase superfamily. OBG GTPase family. In terms of assembly, monomer. Requires Mg(2+) as cofactor.

The protein resides in the cytoplasm. Its function is as follows. An essential GTPase which binds GTP, GDP and possibly (p)ppGpp with moderate affinity, with high nucleotide exchange rates and a fairly low GTP hydrolysis rate. Plays a role in control of the cell cycle, stress response, ribosome biogenesis and in those bacteria that undergo differentiation, in morphogenesis control. The chain is GTPase Obg from Paenarthrobacter aurescens (strain TC1).